Consider the following 209-residue polypeptide: C-type lectin domain family 6 member A (209 aa).

Residues 1 to 20 (MVQERHPQRKGVCWTLRLWS) are Cytoplasmic-facing. The helical; Signal-anchor for type II membrane protein transmembrane segment at 21–43 (TAVISMLLLSTCFIASCMVTYQF) threads the bilayer. At 44 to 209 (TMEKPNRRLS…SICETKKIYL (166 aa)) the chain is on the extracellular side. Disulfide bonds link Cys-64–Cys-78 and Cys-79–Cys-90. The C-type lectin domain occupies 86 to 203 (FGSSCYLIST…CDSKHNSICE (118 aa)). Ca(2+) contacts are provided by Val-116, Asn-118, and Glu-122. An N-linked (GlcNAc...) asparagine glycan is attached at Asn-131. Residues Glu-168, Asn-170, and Glu-174 each coordinate Ca(2+). Residues 168-170 (EPN), Glu-174, Trp-182, and 190-191 (ND) contribute to the alpha-D-mannopyranose site. The cysteines at positions 176 and 194 are disulfide-linked. 3 residues coordinate Ca(2+): Asn-190, Asp-191, and Glu-203.

As to quaternary structure, associated with FCER1G. Heterodimer with CLEC4D; this heterodimer forms a pattern recognition receptor (PRR) against fungal infection.

The protein resides in the cell membrane. Its function is as follows. Calcium-dependent lectin that acts as a pattern recognition receptor (PRR) of the innate immune system: specifically recognizes and binds alpha-mannans on C.albicans hypheas. Binding of C.albicans alpha-mannans to this receptor complex leads to phosphorylation of the immunoreceptor tyrosine-based activation motif (ITAM) of FCER1G, triggering activation of SYK, CARD9 and NF-kappa-B, consequently driving maturation of antigen-presenting cells and shaping antigen-specific priming of T-cells toward effector T-helper 1 and T-helper 17 cell subtypes. Also recognizes, in a mannose-dependent manner, allergens from house dust mite and fungi, by promoting cysteinyl leukotriene production. Recognizes soluble elements from the eggs of Shistosoma mansoni altering adaptive immune responses. In Rattus norvegicus (Rat), this protein is C-type lectin domain family 6 member A (CLEC6A).